Here is a 553-residue protein sequence, read N- to C-terminus: Glutamine--tRNA ligase (553 aa).

The short motif at 34–44 (PEPNGYLHIGH) is the 'HIGH' region element. Residues 35–37 (EPN) and 41–47 (HIGHAKS) each bind ATP. 2 residues coordinate L-glutamine: aspartate 67 and tyrosine 212. ATP-binding positions include threonine 231, 261–262 (RL), and 269–271 (MSK). The 'KMSKS' region signature appears at 268–272 (IMSKR).

The protein belongs to the class-I aminoacyl-tRNA synthetase family. As to quaternary structure, monomer.

The protein resides in the cytoplasm. The catalysed reaction is tRNA(Gln) + L-glutamine + ATP = L-glutaminyl-tRNA(Gln) + AMP + diphosphate. This is Glutamine--tRNA ligase from Tolumonas auensis (strain DSM 9187 / NBRC 110442 / TA 4).